Reading from the N-terminus, the 212-residue chain is Pyrrolidone-carboxylate peptidase (212 aa).

Active-site residues include glutamate 80, cysteine 143, and histidine 165.

The protein belongs to the peptidase C15 family. In terms of assembly, homotetramer.

The protein localises to the cytoplasm. It carries out the reaction Release of an N-terminal pyroglutamyl group from a polypeptide, the second amino acid generally not being Pro.. In terms of biological role, removes 5-oxoproline from various penultimate amino acid residues except L-proline. The polypeptide is Pyrrolidone-carboxylate peptidase (Aliivibrio fischeri (strain MJ11) (Vibrio fischeri)).